The following is a 136-amino-acid chain: ATP synthase epsilon chain (136 aa).

This sequence belongs to the ATPase epsilon chain family. F-type ATPases have 2 components, CF(1) - the catalytic core - and CF(0) - the membrane proton channel. CF(1) has five subunits: alpha(3), beta(3), gamma(1), delta(1), epsilon(1). CF(0) has three main subunits: a, b and c.

The protein localises to the cell inner membrane. Its function is as follows. Produces ATP from ADP in the presence of a proton gradient across the membrane. This chain is ATP synthase epsilon chain, found in Myxococcus xanthus (strain DK1622).